A 300-amino-acid chain; its full sequence is Ribosomal RNA small subunit methyltransferase A (300 aa).

S-adenosyl-L-methionine is bound by residues Asn-36, Val-38, Gly-63, Glu-84, Asp-113, and Asn-131.

This sequence belongs to the class I-like SAM-binding methyltransferase superfamily. rRNA adenine N(6)-methyltransferase family. RsmA subfamily.

It is found in the cytoplasm. It carries out the reaction adenosine(1518)/adenosine(1519) in 16S rRNA + 4 S-adenosyl-L-methionine = N(6)-dimethyladenosine(1518)/N(6)-dimethyladenosine(1519) in 16S rRNA + 4 S-adenosyl-L-homocysteine + 4 H(+). Specifically dimethylates two adjacent adenosines (A1518 and A1519) in the loop of a conserved hairpin near the 3'-end of 16S rRNA in the 30S particle. May play a critical role in biogenesis of 30S subunits. The protein is Ribosomal RNA small subunit methyltransferase A of Kineococcus radiotolerans (strain ATCC BAA-149 / DSM 14245 / SRS30216).